The sequence spans 135 residues: UPF0329 protein ECU07_1860/ECU10_0040/ECU11_2100 (135 aa).

This sequence belongs to the UPF0329 family.

The sequence is that of UPF0329 protein ECU07_1860/ECU10_0040/ECU11_2100 from Encephalitozoon cuniculi (strain GB-M1) (Microsporidian parasite).